The sequence spans 3903 residues: Centrin-binding protein SFI1 (3903 aa).

Asn159 and Asn1728 each carry an N-linked (GlcNAc...) asparagine glycan.

In terms of assembly, interacts with CEN1.

It localises to the cytoplasm. Its subcellular location is the cytoskeleton. The protein localises to the microtubule organizing center. It is found in the centrosome. Functionally, part of the centrosome outer core complex. Plays a role in the initiation and assembly of daughter buds. This is Centrin-binding protein SFI1 from Toxoplasma gondii (strain ATCC 50611 / Me49).